Consider the following 179-residue polypeptide: Tegument protein UL55 homolog (179 aa).

Belongs to the alphaherpesvirinae HHV-1 UL55 family.

It is found in the virion tegument. The protein resides in the host nucleus matrix. The sequence is that of Tegument protein UL55 homolog from Homo sapiens (Human).